The following is a 476-amino-acid chain: 1-aminocyclopropane-1-carboxylate synthase 4 (476 aa).

Lysine 282 bears the N6-(pyridoxal phosphate)lysine mark.

Belongs to the class-I pyridoxal-phosphate-dependent aminotransferase family. Homodimer. The cofactor is pyridoxal 5'-phosphate.

The catalysed reaction is S-adenosyl-L-methionine = 1-aminocyclopropane-1-carboxylate + S-methyl-5'-thioadenosine + H(+). It participates in alkene biosynthesis; ethylene biosynthesis via S-adenosyl-L-methionine; ethylene from S-adenosyl-L-methionine: step 1/2. In terms of biological role, catalyzes the formation of 1-aminocyclopropane-1-carboxylate, a direct precursor of ethylene in higher plants. This chain is 1-aminocyclopropane-1-carboxylate synthase 4 (ACS4), found in Solanum lycopersicum (Tomato).